A 360-amino-acid chain; its full sequence is AA9 family lytic polysaccharide monooxygenase A (360 aa).

A signal peptide spans 1–19 (MKTSFGLLALAAAAKLVNA). Cu(2+) contacts are provided by histidine 20 and histidine 102. Residues cysteine 62 and cysteine 183 are joined by a disulfide bond. O2 is bound at residue histidine 169. Position 180 (tyrosine 180) interacts with Cu(2+). The segment at 254–293 (TSAASASSTKAPATTAAPVQTESAKPATSTTQAAAPTTLV) is disordered. The region spanning 322–358 (GVVKMYAQCGGMNYSGSTTCESGLTCKQWNPYYHQCV) is the CBM1 domain. The N-linked (GlcNAc...) asparagine glycan is linked to asparagine 334.

Belongs to the polysaccharide monooxygenase AA9 family. The cofactor is Cu(2+).

It localises to the secreted. The enzyme catalyses [(1-&gt;4)-beta-D-glucosyl]n+m + reduced acceptor + O2 = 4-dehydro-beta-D-glucosyl-[(1-&gt;4)-beta-D-glucosyl]n-1 + [(1-&gt;4)-beta-D-glucosyl]m + acceptor + H2O.. In terms of biological role, lytic polysaccharide monooxygenase (LPMO) that depolymerizes crystalline and amorphous polysaccharides via the oxidation of scissile alpha- or beta-(1-4)-glycosidic bonds, yielding C4 oxidation products. Catalysis by LPMOs requires the reduction of the active-site copper from Cu(II) to Cu(I) by a reducing agent and H(2)O(2) or O(2) as a cosubstrate. The polypeptide is AA9 family lytic polysaccharide monooxygenase A (eglD) (Aspergillus terreus (strain NIH 2624 / FGSC A1156)).